The following is a 288-amino-acid chain: Eukaryotic translation initiation factor 3 subunit F-2 (288 aa).

Residues 12–149 form the MPN domain; sequence VLLHPLVLFQ…TRIFCAVATG (138 aa).

This sequence belongs to the eIF-3 subunit F family. As to quaternary structure, component of the eukaryotic translation initiation factor 3 (eIF-3) complex. The eIF-3 complex interacts with pix.

Its subcellular location is the cytoplasm. Component of the eukaryotic translation initiation factor 3 (eIF-3) complex, which is involved in protein synthesis of a specialized repertoire of mRNAs and, together with other initiation factors, stimulates binding of mRNA and methionyl-tRNAi to the 40S ribosome. The eIF-3 complex specifically targets and initiates translation of a subset of mRNAs involved in cell proliferation. In Drosophila pseudoobscura pseudoobscura (Fruit fly), this protein is Eukaryotic translation initiation factor 3 subunit F-2.